The chain runs to 390 residues: GTPase Obg (390 aa).

The Obg domain maps to 1–159 (MKFVDEATIL…RELTLELLLL (159 aa)). Positions 128–147 (SRFKSSVNRAPRQKTNGTKG) are disordered. Positions 129–145 (RFKSSVNRAPRQKTNGT) are enriched in polar residues. The OBG-type G domain maps to 160–333 (ADVGMLGLPN…LCWDVMNFLK (174 aa)). GTP is bound by residues 166–173 (GLPNAGKS), 191–195 (FTTLV), 213–216 (DIPG), 283–286 (NKVD), and 314–316 (SAA). The Mg(2+) site is built by Ser173 and Thr193.

This sequence belongs to the TRAFAC class OBG-HflX-like GTPase superfamily. OBG GTPase family. Monomer. The cofactor is Mg(2+).

The protein resides in the cytoplasm. Its function is as follows. An essential GTPase which binds GTP, GDP and possibly (p)ppGpp with moderate affinity, with high nucleotide exchange rates and a fairly low GTP hydrolysis rate. Plays a role in control of the cell cycle, stress response, ribosome biogenesis and in those bacteria that undergo differentiation, in morphogenesis control. The polypeptide is GTPase Obg (Pectobacterium atrosepticum (strain SCRI 1043 / ATCC BAA-672) (Erwinia carotovora subsp. atroseptica)).